Consider the following 552-residue polypeptide: MWVPGFGSARLPQRRRSGLESSSVRPLWLLLLFLLAAVRPVRAWESGDLELFDLVEEVQLNFYEFLGVQQDASSADIRKAYRKLSLTLHPDKNKDENAETQFRQLVAIYEVLKDDERRQRYDDVLINGLPDWRQPVFYYRRVRKMSNAELALLLFIILTVGHYAVVWSIYLEKQLDELLGRKKRERKKKTGSKSVDAAKLGASEKNERLLIKPQWHDLLPCKLGIWFCLTLKALPHLIQDAGQFYAKYKETKLKEKEDALARIEIETLQKQKKVKVKKPKPEFPVYMPLENTYIQSYDHGTSIEEIEEQMDDWLENRKRTQKRQAPEWTEEDLSQLTRSMVKFPGGTPGRWDKIAHELGRSVTDVTTKAKELKDSVTSSPGMTRLSELKSNGQNSRPIKIATALPDDIITQREDSAGAMEDEEHEAAEGEQESATTEARPRRRKSARAAEAVTRVEPEEKLRGKRQKDFDISEQNDSSDEEKQRKERTRAAEEAWTQSQQKLLELALQQYPKGASDRWDKIAKCVPSKSKEDCIARYKLLVELVQKKKQAKS.

The first 43 residues, 1–43 (MWVPGFGSARLPQRRRSGLESSSVRPLWLLLLFLLAAVRPVRA), serve as a signal peptide directing secretion. Over 44–149 (WESGDLELFD…RRVRKMSNAE (106 aa)) the chain is Lumenal. Positions 56-129 (EEVQLNFYEF…RYDDVLINGL (74 aa)) constitute a J domain. The helical transmembrane segment at 150 to 170 (LALLLFIILTVGHYAVVWSIY) threads the bilayer. Topologically, residues 171–552 (LEKQLDELLG…LVQKKKQAKS (382 aa)) are cytoplasmic. The SANT 1 domain occupies 323-377 (RQAPEWTEEDLSQLTRSMVKFPGGTPGRWDKIAHELGRSVTDVTTKAKELKDSVT). Positions 370 to 495 (KELKDSVTSS…ERTRAAEEAW (126 aa)) are disordered. Serine 379 bears the Phosphoserine mark. A compositionally biased stretch (acidic residues) spans 419-431 (MEDEEHEAAEGEQ). Residues 453–470 (TRVEPEEKLRGKRQKDFD) are compositionally biased toward basic and acidic residues. Residues serine 477 and serine 478 each carry the phosphoserine modification. A compositionally biased stretch (basic and acidic residues) spans 480–492 (EEKQRKERTRAAE). The SANT 2 domain occupies 490–545 (AAEEAWTQSQQKLLELALQQYPKGASDRWDKIAKCVPSKSKEDCIARYKLLVELVQ).

As to quaternary structure, interacts (via J domain) with HSPA5. Interacts (via cytosolic domain) with ribosomes. Interacts (via SANT 2 domain) with SERPINA3; the interaction delays the formation of the covalent inhibitory complex SERPINA3-chymotrypsin, but does not alter the catalytic activity of SERPINA3. Interacts (via SANT 2 domain) with ITIH4 (via C-terminus); the interaction protects ITIH4 against in vitro cleavage by kallikrein. In terms of tissue distribution, widely expressed.

The protein localises to the endoplasmic reticulum membrane. The protein resides in the nucleus membrane. It localises to the microsome membrane. Functionally, may modulate protein synthesis. The sequence is that of DnaJ homolog subfamily C member 1 (Dnajc1) from Mus musculus (Mouse).